Reading from the N-terminus, the 98-residue chain is Acylphosphatase-1 (98 aa).

An Acylphosphatase-like domain is found at 8–98 (SVDYEVFGKV…LEHSTFSICK (91 aa)). Residues Arg-23 and Asn-41 contribute to the active site.

This sequence belongs to the acylphosphatase family.

It catalyses the reaction an acyl phosphate + H2O = a carboxylate + phosphate + H(+). This chain is Acylphosphatase-1 (acyp1), found in Xenopus tropicalis (Western clawed frog).